A 608-amino-acid chain; its full sequence is Glutamine--fructose-6-phosphate aminotransferase [isomerizing] (608 aa).

The active-site Nucleophile; for GATase activity is C2. A Glutamine amidotransferase type-2 domain is found at 2–217; that stretch reads CGIVGIVGTQ…DGDCAIVTRD (216 aa). SIS domains are found at residues 281 to 422 and 456 to 598; these read ADKA…ARGT and LSRD…VDQP. Residue K603 is the For Fru-6P isomerization activity of the active site.

Homodimer.

It localises to the cytoplasm. The catalysed reaction is D-fructose 6-phosphate + L-glutamine = D-glucosamine 6-phosphate + L-glutamate. Functionally, catalyzes the first step in hexosamine metabolism, converting fructose-6P into glucosamine-6P using glutamine as a nitrogen source. The sequence is that of Glutamine--fructose-6-phosphate aminotransferase [isomerizing] from Agrobacterium fabrum (strain C58 / ATCC 33970) (Agrobacterium tumefaciens (strain C58)).